The following is a 398-amino-acid chain: Elongation factor Tu (398 aa).

Positions 10 to 207 constitute a tr-type G domain; sequence KPHVNIGTIG…TVDDYIPDPE (198 aa). The interval 19–26 is G1; it reads GHVDHGKT. Residue 19–26 coordinates GTP; the sequence is GHVDHGKT. Thr26 is a Mg(2+) binding site. The interval 63 to 67 is G2; sequence GITIN. Positions 84-87 are G3; sequence DAPG. Residues 84–88 and 139–142 each bind GTP; these read DAPGH and NKVD. A G4 region spans residues 139–142; that stretch reads NKVD. A G5 region spans residues 177-179; sequence SAL.

This sequence belongs to the TRAFAC class translation factor GTPase superfamily. Classic translation factor GTPase family. EF-Tu/EF-1A subfamily. As to quaternary structure, monomer.

The protein localises to the cytoplasm. The enzyme catalyses GTP + H2O = GDP + phosphate + H(+). GTP hydrolase that promotes the GTP-dependent binding of aminoacyl-tRNA to the A-site of ribosomes during protein biosynthesis. The polypeptide is Elongation factor Tu (Streptococcus mutans serotype c (strain ATCC 700610 / UA159)).